The following is a 28-amino-acid chain: Potassium channel toxin alpha-KTx 9.7 (28 aa).

3 disulfide bridges follow: cysteine 3–cysteine 19, cysteine 6–cysteine 24, and cysteine 10–cysteine 26.

In terms of tissue distribution, expressed by the venom gland.

It localises to the secreted. Functionally, calcium channel activator. Rapidly and reversibly activates ryanodine receptor 1 (RYR1). This chain is Potassium channel toxin alpha-KTx 9.7, found in Hottentotta judaicus (Black scorpion).